The sequence spans 452 residues: Cobyrinate a,c-diamide synthase (452 aa).

A GATase cobBQ-type domain is found at 244–437 (KIAYAYDEAF…VHINLYTYKE (194 aa)). Catalysis depends on C327, which acts as the Nucleophile.

It belongs to the CobB/CbiA family. Requires Mg(2+) as cofactor.

It carries out the reaction cob(II)yrinate + 2 L-glutamine + 2 ATP + 2 H2O = cob(II)yrinate a,c diamide + 2 L-glutamate + 2 ADP + 2 phosphate + 2 H(+). Its pathway is cofactor biosynthesis; adenosylcobalamin biosynthesis; cob(II)yrinate a,c-diamide from sirohydrochlorin (anaerobic route): step 10/10. Catalyzes the ATP-dependent amidation of the two carboxylate groups at positions a and c of cobyrinate, using either L-glutamine or ammonia as the nitrogen source. In Caldanaerobacter subterraneus subsp. tengcongensis (strain DSM 15242 / JCM 11007 / NBRC 100824 / MB4) (Thermoanaerobacter tengcongensis), this protein is Cobyrinate a,c-diamide synthase.